Reading from the N-terminus, the 301-residue chain is MAPSNLPESTTPAEVPAPYGTGPAAAAQAASAAGRKPISRVRIHHLQQAKDNGEHFAMLTAYEQYTAEIFDQAGIEVLLVGDSASNNVYGNETSLPVTVDELLPLTRAVSRSAKRALIVADLPFGSYEVSPGQAVATGVRFLKEGLAHAVKIEGTAYYADTVRAMVQAGIPVMAHIGFTPQSEHSLGGYRVQGRGDDAQRLVDDAVALQDAGAFSVLMEMVPAETAAAVDAALRVPTVGIGAGKTTTGQVLVWQDMAGLRGGKMAKFVKQYADLRTTLSDAAAAYGEDVRSGQFPGPEHSF.

The span at 1–12 (MAPSNLPESTTP) shows a compositional bias: polar residues. Positions 1-24 (MAPSNLPESTTPAEVPAPYGTGPA) are disordered. Aspartate 82 and aspartate 121 together coordinate Mg(2+). Residues 82-83 (DS), aspartate 121, and lysine 151 contribute to the 3-methyl-2-oxobutanoate site. Residue glutamate 153 coordinates Mg(2+). Glutamate 219 acts as the Proton acceptor in catalysis.

It belongs to the PanB family. In terms of assembly, homodecamer; pentamer of dimers. Mg(2+) serves as cofactor.

It is found in the cytoplasm. It catalyses the reaction 3-methyl-2-oxobutanoate + (6R)-5,10-methylene-5,6,7,8-tetrahydrofolate + H2O = 2-dehydropantoate + (6S)-5,6,7,8-tetrahydrofolate. It functions in the pathway cofactor biosynthesis; (R)-pantothenate biosynthesis; (R)-pantoate from 3-methyl-2-oxobutanoate: step 1/2. Its function is as follows. Catalyzes the reversible reaction in which hydroxymethyl group from 5,10-methylenetetrahydrofolate is transferred onto alpha-ketoisovalerate to form ketopantoate. The protein is 3-methyl-2-oxobutanoate hydroxymethyltransferase of Paenarthrobacter aurescens (strain TC1).